A 393-amino-acid polypeptide reads, in one-letter code: Phosphoglycerate kinase (393 aa).

Substrate-binding positions include 22–24, R37, 60–63, R119, and R152; these read DFN and HLGR. Residues K202, G293, E324, and 350 to 353 contribute to the ATP site; that span reads GGDS.

This sequence belongs to the phosphoglycerate kinase family. As to quaternary structure, monomer.

Its subcellular location is the cytoplasm. It carries out the reaction (2R)-3-phosphoglycerate + ATP = (2R)-3-phospho-glyceroyl phosphate + ADP. The protein operates within carbohydrate degradation; glycolysis; pyruvate from D-glyceraldehyde 3-phosphate: step 2/5. This is Phosphoglycerate kinase from Borreliella afzelii (strain PKo) (Borrelia afzelii).